We begin with the raw amino-acid sequence, 256 residues long: NH(3)-dependent NAD(+) synthetase (256 aa).

29–36 (GISGGIDS) is an ATP binding site. Asp35 is a Mg(2+) binding site. Arg115 is a binding site for deamido-NAD(+). Thr135 provides a ligand contact to ATP. Glu140 lines the Mg(2+) pocket. Positions 148 and 155 each coordinate deamido-NAD(+). ATP is bound by residues Lys164 and Ser186. Residue 245–246 (HK) coordinates deamido-NAD(+).

The protein belongs to the NAD synthetase family. In terms of assembly, homodimer.

The enzyme catalyses deamido-NAD(+) + NH4(+) + ATP = AMP + diphosphate + NAD(+) + H(+). The protein operates within cofactor biosynthesis; NAD(+) biosynthesis; NAD(+) from deamido-NAD(+) (ammonia route): step 1/1. Its function is as follows. Catalyzes the ATP-dependent amidation of deamido-NAD to form NAD. Uses ammonia as a nitrogen source. This is NH(3)-dependent NAD(+) synthetase from Methanosarcina mazei (strain ATCC BAA-159 / DSM 3647 / Goe1 / Go1 / JCM 11833 / OCM 88) (Methanosarcina frisia).